The following is a 426-amino-acid chain: UPF0229 protein YeaH (426 aa).

Residues 78 to 92 are compositionally biased toward basic and acidic residues; it reads GNDHFIQNDRIERPQ. The interval 78–108 is disordered; sequence GNDHFIQNDRIERPQDGGGSGSGNGQASQDG.

Belongs to the UPF0229 family.

This Salmonella arizonae (strain ATCC BAA-731 / CDC346-86 / RSK2980) protein is UPF0229 protein YeaH.